The sequence spans 319 residues: Porphobilinogen deaminase 1 (319 aa).

The residue at position 244 (C244) is an S-(dipyrrolylmethanemethyl)cysteine.

It belongs to the HMBS family. Monomer. It depends on dipyrromethane as a cofactor.

It catalyses the reaction 4 porphobilinogen + H2O = hydroxymethylbilane + 4 NH4(+). Its pathway is porphyrin-containing compound metabolism; protoporphyrin-IX biosynthesis; coproporphyrinogen-III from 5-aminolevulinate: step 2/4. Tetrapolymerization of the monopyrrole PBG into the hydroxymethylbilane pre-uroporphyrinogen in several discrete steps. The chain is Porphobilinogen deaminase 1 (hemC1) from Streptomyces coelicolor (strain ATCC BAA-471 / A3(2) / M145).